Here is a 126-residue protein sequence, read N- to C-terminus: DNA-directed RNA polymerase subunit omega (126 aa).

Belongs to the RNA polymerase subunit omega family. As to quaternary structure, the RNAP catalytic core consists of 2 alpha, 1 beta, 1 beta' and 1 omega subunit. When a sigma factor is associated with the core the holoenzyme is formed, which can initiate transcription.

The enzyme catalyses RNA(n) + a ribonucleoside 5'-triphosphate = RNA(n+1) + diphosphate. In terms of biological role, promotes RNA polymerase assembly. Latches the N- and C-terminal regions of the beta' subunit thereby facilitating its interaction with the beta and alpha subunits. In Rickettsia felis (strain ATCC VR-1525 / URRWXCal2) (Rickettsia azadi), this protein is DNA-directed RNA polymerase subunit omega.